A 298-amino-acid chain; its full sequence is MNQTYGRLVSRAAIAATAMASALLLIKIFAWWYTGSVSILAALVDSLVDIAASLTNLLVVRYSLQPADDEHTFGHGKAESLAALAQSMFISGSALFLTSIQNLIKPTPMNDPGVGIGVTVIALICTIILVTFQRWVVRKTQSQAVRADMLHYQSDVMMNGAILIALGLSWYGWHRADALFALGIGIYILYSALRMGYEAVQSLLDRALPDAERQEIIDIVTSWPGVSGAHDLRTRQSGPTRFIQIHLEMEDNLPLVQAHFVADQVEQAILRRFPGSDVIIHQDPCSVVPREGRKFELV.

The helical transmembrane segment at 24-44 threads the bilayer; the sequence is LLIKIFAWWYTGSVSILAALV. Aspartate 45 and aspartate 49 together coordinate Zn(2+). The next 2 helical transmembrane spans lie at 80–100 and 112–132; these read SLAALAQSMFISGSALFLTSI and PGVGIGVTVIALICTIILVTF. Residues histidine 151 and aspartate 155 each coordinate Zn(2+). The next 2 helical transmembrane spans lie at 154-174 and 176-196; these read SDVMMNGAILIALGLSWYGWH and ADALFALGIGIYILYSALRMG.

Belongs to the cation diffusion facilitator (CDF) transporter (TC 2.A.4) family. FieF subfamily. Homodimer.

The protein resides in the cell inner membrane. The enzyme catalyses Zn(2+)(in) + H(+)(out) = Zn(2+)(out) + H(+)(in). The catalysed reaction is Cd(2+)(in) + H(+)(out) = Cd(2+)(out) + H(+)(in). It catalyses the reaction Fe(2+)(in) + H(+)(out) = Fe(2+)(out) + H(+)(in). Divalent metal cation transporter which exports Zn(2+), Cd(2+) and possibly Fe(2+). May be involved in zinc and iron detoxification by efflux. In Salmonella typhi, this protein is Cation-efflux pump FieF.